A 330-amino-acid chain; its full sequence is Zinc finger Ran-binding domain-containing protein 2 (330 aa).

S9 is modified (phosphoserine). The RanBP2-type 1 zinc-finger motif lies at 9-40 (SDGDWICPDKKCGNVNFARRTSCNRCGREKTT). K18, K54, and K92 each carry N6-acetyllysine. Residues 65–94 (SANDWQCKTCSNVNWARRSECNMCNTPKYA) form a RanBP2-type 2 zinc finger. A disordered region spans residues 117 to 330 (REESDGEYDE…SGSRSSSKKK (214 aa)). Phosphoserine is present on residues S120, S153, S181, S188, and S193. Residues 150–163 (DKESEGEEEDEDED) are compositionally biased toward acidic residues. The tract at residues 151–324 (KESEGEEEDE…SSGSSHSGSR (174 aa)) is required for nuclear targeting. The segment covering 196–210 (KKSNRRSRSKSRSSH) has biased composition (basic residues). Composition is skewed to low complexity over residues 211–224 (SRSSSRSSSPSSSR) and 232–242 (RSSSSSQSRSR). Composition is skewed to basic residues over residues 251 to 273 (SRGSKSRSSSRSHRGSSSPRKRS) and 298 to 314 (RKKRRTRSRSPERRHRS). T303 is modified (phosphothreonine). Residues S305, S307, and R310 each carry the phosphoserine modification. Residues 315-330 (SSGSSHSGSRSSSKKK) show a composition bias toward low complexity.

The protein belongs to the ZRANB2 family. In terms of assembly, interacts with the C-terminal half of SNRNP70, the Arg/Ser-rich domain of AKAP17A as well as with U2AF1 and CLK1. In terms of processing, isoform 2 is phosphorylated on Ser-310 upon DNA damage, probably by ATM or ATR.

It localises to the nucleus. Its function is as follows. Splice factor required for alternative splicing of TRA2B/SFRS10 transcripts. Binds to ssRNA containing the consensus sequence 5'-AGGUAA-3'. May interfere with constitutive 5'-splice site selection. In Homo sapiens (Human), this protein is Zinc finger Ran-binding domain-containing protein 2 (ZRANB2).